The primary structure comprises 283 residues: Polyamine aminopropyltransferase (283 aa).

The PABS domain occupies 5–238 (STWIDEYHKG…GIWSWTFASE (234 aa)). Residue Gln-32 participates in S-methyl-5'-thioadenosine binding. Spermidine is bound by residues His-63 and Asp-87. Residues Glu-107 and 139–140 (DG) each bind S-methyl-5'-thioadenosine. Asp-158 serves as the catalytic Proton acceptor. A spermidine-binding site is contributed by 158–161 (DCSD).

Belongs to the spermidine/spermine synthase family. As to quaternary structure, homodimer or homotetramer.

It localises to the cytoplasm. It catalyses the reaction S-adenosyl 3-(methylsulfanyl)propylamine + putrescine = S-methyl-5'-thioadenosine + spermidine + H(+). The protein operates within amine and polyamine biosynthesis; spermidine biosynthesis; spermidine from putrescine: step 1/1. In terms of biological role, catalyzes the irreversible transfer of a propylamine group from the amino donor S-adenosylmethioninamine (decarboxy-AdoMet) to putrescine (1,4-diaminobutane) to yield spermidine. The polypeptide is Polyamine aminopropyltransferase (Prochlorococcus marinus (strain MIT 9312)).